Here is a 55-residue protein sequence, read N- to C-terminus: Large ribosomal subunit protein bL33B (55 aa).

It belongs to the bacterial ribosomal protein bL33 family.

In Kineococcus radiotolerans (strain ATCC BAA-149 / DSM 14245 / SRS30216), this protein is Large ribosomal subunit protein bL33B.